Here is a 351-residue protein sequence, read N- to C-terminus: Phosphoribosylformylglycinamidine cyclo-ligase (351 aa).

Belongs to the AIR synthase family.

It is found in the cytoplasm. The enzyme catalyses 2-formamido-N(1)-(5-O-phospho-beta-D-ribosyl)acetamidine + ATP = 5-amino-1-(5-phospho-beta-D-ribosyl)imidazole + ADP + phosphate + H(+). The protein operates within purine metabolism; IMP biosynthesis via de novo pathway; 5-amino-1-(5-phospho-D-ribosyl)imidazole from N(2)-formyl-N(1)-(5-phospho-D-ribosyl)glycinamide: step 2/2. The sequence is that of Phosphoribosylformylglycinamidine cyclo-ligase from Burkholderia cenocepacia (strain HI2424).